We begin with the raw amino-acid sequence, 637 residues long: Poly [ADP-ribose] polymerase 2 (637 aa).

The DNA-binding element occupies 1 to 140 (MANKLKVDEL…KKEEKIVTAT (140 aa)). An SAP 1 domain is found at 2 to 36 (ANKLKVDELRLKLAERGLSTTGVKAVLVERLEEAI). Positions 35–46 (AIAEDTKKEESK) are enriched in basic and acidic residues. Residues 35 to 56 (AIAEDTKKEESKSKRKRNSSND) are disordered. Positions 41 to 62 (KKEESKSKRKRNSSNDTYESNK) match the Nuclear localization signal motif. Positions 69-103 (FRGMIVKELREEAIKRGLDTTGTKKDLLERLCNDA) constitute an SAP 2 domain. A compositionally biased stretch (polar residues) spans 106–117 (VSNAPVKSSNGT). Positions 106–134 (VSNAPVKSSNGTDEAEDDNNGFEEEKKEE) are disordered. Residues 118-127 (DEAEDDNNGF) are compositionally biased toward acidic residues. Residues 158–255 (QYHVLQRGDD…KEFIPHPKSY (98 aa)) form the WGR domain. The PARP alpha-helical domain occupies 286–404 (QSKLDTRVAK…EIELATKLLS (119 aa)). A PARP catalytic domain is found at 412–637 (DPLYYHYQQL…VIQVKFNYKH (226 aa)).

It belongs to the ARTD/PARP family.

The protein resides in the nucleus. The enzyme catalyses NAD(+) + (ADP-D-ribosyl)n-acceptor = nicotinamide + (ADP-D-ribosyl)n+1-acceptor + H(+).. It carries out the reaction L-aspartyl-[protein] + NAD(+) = 4-O-(ADP-D-ribosyl)-L-aspartyl-[protein] + nicotinamide. It catalyses the reaction L-glutamyl-[protein] + NAD(+) = 5-O-(ADP-D-ribosyl)-L-glutamyl-[protein] + nicotinamide. Involved in the base excision repair (BER) pathway, by catalyzing the poly(ADP-ribosyl)ation of a limited number of acceptor proteins involved in chromatin architecture and in DNA metabolism. This modification follows DNA damages and appears as an obligatory step in a detection/signaling pathway leading to the reparation of DNA strand breaks. The sequence is that of Poly [ADP-ribose] polymerase 2 (PARP2) from Arabidopsis thaliana (Mouse-ear cress).